The primary structure comprises 393 residues: Bifunctional enzyme IspD/IspF (393 aa).

Positions 1–234 (MTISQRTAAI…ARLAAQLGDI (234 aa)) are 2-C-methyl-D-erythritol 4-phosphate cytidylyltransferase. The interval 235 to 393 (RTGTGYDVHA…SATIRLPWSA (159 aa)) is 2-C-methyl-D-erythritol 2,4-cyclodiphosphate synthase. Aspartate 241 and histidine 243 together coordinate a divalent metal cation. Residues 241–243 (DVH) and 267–268 (HS) each bind 4-CDP-2-C-methyl-D-erythritol 2-phosphate. Histidine 275 provides a ligand contact to a divalent metal cation. Residues 289–291 (DIG), 365–368 (TTSE), phenylalanine 372, and arginine 375 contribute to the 4-CDP-2-C-methyl-D-erythritol 2-phosphate site.

This sequence in the N-terminal section; belongs to the IspD/TarI cytidylyltransferase family. IspD subfamily. In the C-terminal section; belongs to the IspF family. It depends on a divalent metal cation as a cofactor.

The enzyme catalyses 2-C-methyl-D-erythritol 4-phosphate + CTP + H(+) = 4-CDP-2-C-methyl-D-erythritol + diphosphate. It catalyses the reaction 4-CDP-2-C-methyl-D-erythritol 2-phosphate = 2-C-methyl-D-erythritol 2,4-cyclic diphosphate + CMP. It functions in the pathway isoprenoid biosynthesis; isopentenyl diphosphate biosynthesis via DXP pathway; isopentenyl diphosphate from 1-deoxy-D-xylulose 5-phosphate: step 2/6. Its pathway is isoprenoid biosynthesis; isopentenyl diphosphate biosynthesis via DXP pathway; isopentenyl diphosphate from 1-deoxy-D-xylulose 5-phosphate: step 4/6. Bifunctional enzyme that catalyzes the formation of 4-diphosphocytidyl-2-C-methyl-D-erythritol from CTP and 2-C-methyl-D-erythritol 4-phosphate (MEP) (IspD), and catalyzes the conversion of 4-diphosphocytidyl-2-C-methyl-D-erythritol 2-phosphate (CDP-ME2P) to 2-C-methyl-D-erythritol 2,4-cyclodiphosphate (ME-CPP) with a corresponding release of cytidine 5-monophosphate (CMP) (IspF). This is Bifunctional enzyme IspD/IspF from Bradyrhizobium sp. (strain BTAi1 / ATCC BAA-1182).